We begin with the raw amino-acid sequence, 184 residues long: Peptidyl-tRNA hydrolase (184 aa).

Tyr17 contributes to the tRNA binding site. His22 acts as the Proton acceptor in catalysis. Residues Phe71, Asn73, and Asn119 each coordinate tRNA.

It belongs to the PTH family. As to quaternary structure, monomer.

The protein resides in the cytoplasm. It carries out the reaction an N-acyl-L-alpha-aminoacyl-tRNA + H2O = an N-acyl-L-amino acid + a tRNA + H(+). In terms of biological role, hydrolyzes ribosome-free peptidyl-tRNAs (with 1 or more amino acids incorporated), which drop off the ribosome during protein synthesis, or as a result of ribosome stalling. Its function is as follows. Catalyzes the release of premature peptidyl moieties from peptidyl-tRNA molecules trapped in stalled 50S ribosomal subunits, and thus maintains levels of free tRNAs and 50S ribosomes. The polypeptide is Peptidyl-tRNA hydrolase (Corynebacterium diphtheriae (strain ATCC 700971 / NCTC 13129 / Biotype gravis)).